The chain runs to 293 residues: uncharacterized protein (293 aa).

Disordered regions lie at residues 20 to 148 (ELHS…NNNT) and 226 to 283 (RENQ…GNKN). 3 stretches are compositionally biased toward acidic residues: residues 37-47 (LEDDEEYDDDQ), 56-91 (EEFD…DDEM), and 99-112 (NIDD…EEEQ). Composition is skewed to low complexity over residues 117 to 148 (TNNN…NNNT) and 232 to 283 (NSNS…GNKN).

This is an uncharacterized protein from Dictyostelium discoideum (Social amoeba).